We begin with the raw amino-acid sequence, 359 residues long: 3-dehydroquinate synthase (359 aa).

Residues 105 to 109 (GVVGD), 129 to 130 (TT), Lys-142, Lys-151, and 169 to 172 (TIKT) each bind NAD(+). The Zn(2+) site is built by Glu-184, His-247, and His-263.

It belongs to the sugar phosphate cyclases superfamily. Dehydroquinate synthase family. Requires Co(2+) as cofactor. Zn(2+) is required as a cofactor. NAD(+) serves as cofactor.

The protein resides in the cytoplasm. It catalyses the reaction 7-phospho-2-dehydro-3-deoxy-D-arabino-heptonate = 3-dehydroquinate + phosphate. Its pathway is metabolic intermediate biosynthesis; chorismate biosynthesis; chorismate from D-erythrose 4-phosphate and phosphoenolpyruvate: step 2/7. Functionally, catalyzes the conversion of 3-deoxy-D-arabino-heptulosonate 7-phosphate (DAHP) to dehydroquinate (DHQ). The polypeptide is 3-dehydroquinate synthase (Ruminiclostridium cellulolyticum (strain ATCC 35319 / DSM 5812 / JCM 6584 / H10) (Clostridium cellulolyticum)).